The primary structure comprises 218 residues: Trimethylamine corrinoid protein 2 (218 aa).

Residues Met1–Lys92 form the B12-binding N-terminal domain. Residues Leu94–Gly218 form the B12-binding domain. His107 contacts methylcob(III)alamin.

The protein belongs to the methylamine corrinoid protein family. As to quaternary structure, can form a complex with MttB.

It participates in one-carbon metabolism; methanogenesis from trimethylamine. Acts probably as a methyl group carrier between MttB and either MtbA or MtaA. The sequence is that of Trimethylamine corrinoid protein 2 (mttC2) from Methanosarcina mazei (strain ATCC BAA-159 / DSM 3647 / Goe1 / Go1 / JCM 11833 / OCM 88) (Methanosarcina frisia).